A 327-amino-acid chain; its full sequence is 4-hydroxyproline 2-epimerase (327 aa).

Catalysis depends on C85, which acts as the Proton acceptor. Residues 86 to 87 (GH), H205, and D231 each bind substrate. The Proton donor role is filled by C235. Residue 236-237 (GT) coordinates substrate.

It belongs to the proline racemase family.

The catalysed reaction is trans-4-hydroxy-L-proline = cis-4-hydroxy-D-proline. Catalyzes the epimerization of trans-4-hydroxy-L-proline (t4LHyp) to cis-4-hydroxy-D-proline (c4DHyp). Displays no proline racemase activity. This chain is 4-hydroxyproline 2-epimerase, found in Roseibium alexandrii (strain DSM 17067 / NCIMB 14079 / DFL-11) (Labrenzia alexandrii).